The primary structure comprises 458 residues: Retinoic acid receptor alpha-B (458 aa).

Residues M1–V79 are modulating. Residues H48–P75 form a disordered region. Residues W49–E64 show a composition bias toward polar residues. The segment at residues Y80–N155 is a DNA-binding region (nuclear receptor). NR C4-type zinc fingers lie at residues C83 to C103 and C119 to C138. The interval D156 to P177 is hinge. Residues D178–S412 form the NR LBD domain. Residues P403 to N411 carry the 9aaTAD motif. The segment at N411–P458 is disordered. Positions L415 to A435 are enriched in gly residues. The segment covering P436 to P458 has biased composition (low complexity).

It belongs to the nuclear hormone receptor family. NR1 subfamily. In terms of assembly, heterodimer; with an rxr molecule. Binds DNA preferentially as a rar/rxr heterodimer. In terms of tissue distribution, in the embryo, zygotic expression largely overlaps that of raraa, with high levels in hindbrain, lateral plate mesoderm (LPM) and tail bud, but in later stages rarab is expressed more broadly in the brain, pectoral fin bud and pharyngeal arches.

The protein localises to the nucleus. Receptor for retinoic acid. Retinoic acid receptors bind as heterodimers to their target response elements in response to their ligands, all-trans or 9-cis retinoic acid, and regulate gene expression in various biological processes. The rar/rxr heterodimers bind to the retinoic acid response elements (RARE) composed of tandem 5'-AGGTCA-3' sites known as DR1-DR5. Required for hindbrain development and, in lateral plate mesoderm, for specification of the pectoral fins. This Danio rerio (Zebrafish) protein is Retinoic acid receptor alpha-B.